We begin with the raw amino-acid sequence, 403 residues long: Nodal homolog (403 aa).

An N-terminal signal peptide occupies residues 1–18 (MAFLTAVLCFGFACMVQG). Positions 19-278 (VPSWLESRIP…RMPGIRRHRR (260 aa)) are excised as a propeptide. Asn68, Asn133, and Asn169 each carry an N-linked (GlcNAc...) asparagine glycan. Residues 195–220 (AERGSGMSSAEFLDSPGDSPQYNPHH) are disordered. Intrachain disulfides connect Cys303–Cys369, Cys332–Cys400, and Cys336–Cys402. Asn341 is a glycosylation site (N-linked (GlcNAc...) asparagine).

Belongs to the TGF-beta family. Homodimer; disulfide-linked. Interacts with, and is inhibited by cer1 and gdf10/bmp3b.

It localises to the secreted. Functionally, cooperation and regulatory loops of multiple nodals are essential for mesendoderm patterning in early embryos. Essential for mesoderm formation and axial patterning during embryonic development. Activates the activin-like signaling pathway to induce dorsal and ventral mesoderm in animal cap ectoderm. In addition, also dorsalizes ventral marginal zone (VMZ) tissues during gastrulation. Acts in a downstream signaling cascade via cripto and cer1 to mediate cardiogenesis in embryonic mesoderm. Directs the orientation of the left-right axis by driving the left-specific gene cascade in the left lateral plate mesoderm. The chain is Nodal homolog from Xenopus tropicalis (Western clawed frog).